The primary structure comprises 254 residues: Isoprenyl transferase (254 aa).

Aspartate 34 is an active-site residue. Aspartate 34 is a Mg(2+) binding site. Residues 35 to 38 (GNGR), tryptophan 39, arginine 47, histidine 51, and 79 to 81 (STE) each bind substrate. Asparagine 82 functions as the Proton acceptor in the catalytic mechanism. Substrate-binding positions include tryptophan 83, arginine 85, arginine 202, and 208 to 210 (RIS). Glutamate 221 contributes to the Mg(2+) binding site.

It belongs to the UPP synthase family. In terms of assembly, homodimer. Mg(2+) is required as a cofactor.

Catalyzes the condensation of isopentenyl diphosphate (IPP) with allylic pyrophosphates generating different type of terpenoids. This is Isoprenyl transferase from Staphylococcus saprophyticus subsp. saprophyticus (strain ATCC 15305 / DSM 20229 / NCIMB 8711 / NCTC 7292 / S-41).